A 994-amino-acid chain; its full sequence is Alpha-mannosidase F (994 aa).

The signal sequence occupies residues 1–20 (MKNFYYFILILLFFNEVCYS). Zn(2+)-binding residues include histidine 35, aspartate 37, and aspartate 151. Catalysis depends on aspartate 151, which acts as the Nucleophile. N-linked (GlcNAc...) asparagine glycosylation is found at asparagine 247 and asparagine 381. Histidine 392 serves as a coordination point for Zn(2+). Asparagine 554, asparagine 712, and asparagine 932 each carry an N-linked (GlcNAc...) asparagine glycan.

The protein belongs to the glycosyl hydrolase 38 family. Requires Zn(2+) as cofactor.

It localises to the secreted. It carries out the reaction Hydrolysis of terminal, non-reducing alpha-D-mannose residues in alpha-D-mannosides.. This chain is Alpha-mannosidase F (manF), found in Dictyostelium discoideum (Social amoeba).